A 456-amino-acid polypeptide reads, in one-letter code: ATP-dependent protease ATPase subunit HslU (456 aa).

Residues I18, 60-65 (GVGKTE), D270, E334, and R406 contribute to the ATP site.

The protein belongs to the ClpX chaperone family. HslU subfamily. In terms of assembly, a double ring-shaped homohexamer of HslV is capped on each side by a ring-shaped HslU homohexamer. The assembly of the HslU/HslV complex is dependent on binding of ATP.

Its subcellular location is the cytoplasm. In terms of biological role, ATPase subunit of a proteasome-like degradation complex; this subunit has chaperone activity. The binding of ATP and its subsequent hydrolysis by HslU are essential for unfolding of protein substrates subsequently hydrolyzed by HslV. HslU recognizes the N-terminal part of its protein substrates and unfolds these before they are guided to HslV for hydrolysis. The sequence is that of ATP-dependent protease ATPase subunit HslU from Exiguobacterium sibiricum (strain DSM 17290 / CCUG 55495 / CIP 109462 / JCM 13490 / 255-15).